We begin with the raw amino-acid sequence, 146 residues long: Hemoglobin subunit beta (146 aa).

Position 1 is an N-acetylvaline (valine 1). The 145-residue stretch at 2–146 (HLSGGEKSAV…VAHALGHKYH (145 aa)) folds into the Globin domain. Threonine 12 carries the phosphothreonine modification. Lysine 59 carries the post-translational modification N6-acetyllysine. Residue histidine 63 coordinates heme b. An N6-acetyllysine modification is found at lysine 82. A heme b-binding site is contributed by histidine 92. Cysteine 93 bears the S-nitrosocysteine mark. Residue lysine 144 is modified to N6-acetyllysine.

It belongs to the globin family. In terms of assembly, heterotetramer of two alpha chains and two beta chains. In terms of tissue distribution, red blood cells.

Its function is as follows. Involved in oxygen transport from the lung to the various peripheral tissues. The sequence is that of Hemoglobin subunit beta (HBB) from Ornithorhynchus anatinus (Duckbill platypus).